We begin with the raw amino-acid sequence, 262 residues long: Type III pantothenate kinase (262 aa).

An ATP-binding site is contributed by 12–19 (DIGNTSIA). Substrate-binding positions include Y94 and 109–112 (GSDV). D111 acts as the Proton acceptor in catalysis. D132 contacts K(+). ATP is bound at residue T135. A substrate-binding site is contributed by T187.

It belongs to the type III pantothenate kinase family. In terms of assembly, homodimer. The cofactor is NH4(+). It depends on K(+) as a cofactor.

It is found in the cytoplasm. The catalysed reaction is (R)-pantothenate + ATP = (R)-4'-phosphopantothenate + ADP + H(+). The protein operates within cofactor biosynthesis; coenzyme A biosynthesis; CoA from (R)-pantothenate: step 1/5. Catalyzes the phosphorylation of pantothenate (Pan), the first step in CoA biosynthesis. This is Type III pantothenate kinase from Borrelia garinii subsp. bavariensis (strain ATCC BAA-2496 / DSM 23469 / PBi) (Borreliella bavariensis).